Reading from the N-terminus, the 199-residue chain is Small ribosomal subunit protein mS38 (199 aa).

Belongs to the mitochondrion-specific ribosomal protein mS38 family. In terms of assembly, component of the mitochondrial small ribosomal subunit (mt-SSU). Mature mammalian 55S mitochondrial ribosomes consist of a small (28S) and a large (39S) subunit. The 28S small subunit contains a 12S ribosomal RNA (12S mt-rRNA) and 30 different proteins. The 39S large subunit contains a 16S rRNA (16S mt-rRNA), a copy of mitochondrial valine transfer RNA (mt-tRNA(Val)), which plays an integral structural role, and 52 different proteins. Interacts with Aurora-A. Ubiquitously expressed and especially highly expressed in heart, skeletal muscle and testis.

It is found in the mitochondrion matrix. It localises to the nucleus. In terms of biological role, may act as a negative regulator of Aurora-A kinase, by down-regulation through proteasome-dependent degradation. In Homo sapiens (Human), this protein is Small ribosomal subunit protein mS38 (AURKAIP1).